A 434-amino-acid chain; its full sequence is Quinolone resistance transporter (434 aa).

12 helical membrane-spanning segments follow: residues 15–35 (LIPALVILYLVAYIDRAAVGF), 45–65 (GIGDAAYGLGAGLFFIGYFLF), 85–105 (ILLTWGLITMAMALIQGPKSF), 110–130 (FLLGVAEAGFFPGVLYLITQW), 142–162 (MFVLSQPIAMMIAGPLAGLLL), 175–195 (WLFVAVGLPAVLLALPTFLWL), 241–261 (VLLLALYYLPVTLSIYGLNLW), 275–295 (IQIGFLSSIPYIFGIIGLLII), 306–326 (YGHLSFLYALGACAMFLSGWL), 333–353 (LAALAVVAFCLFSSTAVFWTL), 367–387 (IALINSVGNLGGYVGPFGIGL), and 396–416 (AAGLYFLSIVMLFGLILTYIV).

The protein belongs to the major facilitator superfamily.

The protein resides in the cell inner membrane. Efflux pump that mediates resistance to quinolone-type antibiotics. The protein is Quinolone resistance transporter of Acinetobacter baumannii.